We begin with the raw amino-acid sequence, 204 residues long: Glycerol-3-phosphate acyltransferase (204 aa).

The next 5 helical transmembrane spans lie at 8 to 28, 53 to 73, 81 to 101, 116 to 136, and 155 to 175; these read MLVFAYLLGSINSAIIVCYIF, VPAIITLAFDILKGLVPVVLA, FITACTALYAILGHIFPIFFG, FGFSWILGLIFVVTWLCVAVI, and VIFTSDLQVATPFLIIAIIIL.

The protein belongs to the PlsY family. Probably interacts with PlsX.

The protein resides in the cell inner membrane. The enzyme catalyses an acyl phosphate + sn-glycerol 3-phosphate = a 1-acyl-sn-glycero-3-phosphate + phosphate. It participates in lipid metabolism; phospholipid metabolism. In terms of biological role, catalyzes the transfer of an acyl group from acyl-phosphate (acyl-PO(4)) to glycerol-3-phosphate (G3P) to form lysophosphatidic acid (LPA). This enzyme utilizes acyl-phosphate as fatty acyl donor, but not acyl-CoA or acyl-ACP. In Francisella philomiragia subsp. philomiragia (strain ATCC 25017 / CCUG 19701 / FSC 153 / O#319-036), this protein is Glycerol-3-phosphate acyltransferase.